We begin with the raw amino-acid sequence, 419 residues long: Serine hydroxymethyltransferase (419 aa).

(6S)-5,6,7,8-tetrahydrofolate contacts are provided by residues Leu121 and 125–127 (GHL). Residue Lys230 is modified to N6-(pyridoxal phosphate)lysine. 355–357 (SPF) is a (6S)-5,6,7,8-tetrahydrofolate binding site.

Belongs to the SHMT family. In terms of assembly, homodimer. Pyridoxal 5'-phosphate serves as cofactor.

It localises to the cytoplasm. The catalysed reaction is (6R)-5,10-methylene-5,6,7,8-tetrahydrofolate + glycine + H2O = (6S)-5,6,7,8-tetrahydrofolate + L-serine. It functions in the pathway one-carbon metabolism; tetrahydrofolate interconversion. Its pathway is amino-acid biosynthesis; glycine biosynthesis; glycine from L-serine: step 1/1. Catalyzes the reversible interconversion of serine and glycine with tetrahydrofolate (THF) serving as the one-carbon carrier. This reaction serves as the major source of one-carbon groups required for the biosynthesis of purines, thymidylate, methionine, and other important biomolecules. Also exhibits THF-independent aldolase activity toward beta-hydroxyamino acids, producing glycine and aldehydes, via a retro-aldol mechanism. The chain is Serine hydroxymethyltransferase from Streptococcus equi subsp. equi (strain 4047).